We begin with the raw amino-acid sequence, 793 residues long: Ankyrin repeat domain-containing protein SOWAHB (793 aa).

Disordered stretches follow at residues 83-185 (EEGL…QARA), 219-290 (ATAE…ELLT), 337-360 (QLPL…SSHS), and 396-543 (DFVD…SPRV). Composition is skewed to low complexity over residues 96 to 108 (APSA…CSPR), 134 to 144 (AGAAARAADAA), and 175 to 185 (AAAAAGAQARA). Ser106 carries the post-translational modification Phosphoserine. Over residues 220 to 244 (TAEEKPARALPAQDDRGASREREEG) the composition is skewed to basic and acidic residues. Positions 246-273 (LAEPAPVPAVAHSPPATVEAATSRASPP) are enriched in low complexity. Ser271 is subject to Phosphoserine. The span at 396–406 (DFVDQESDGSE) shows a compositional bias: acidic residues. Low complexity-rich tracts occupy residues 407-417 (ESSSGPKDSPG) and 498-508 (RSSLAGRAKLS). The span at 521–533 (KRSRRPPRSRKPS) shows a compositional bias: basic residues. ANK repeat units lie at residues 630-659 (TGYT…KAGI) and 669-699 (CGYT…RVNV). Phosphoserine is present on Ser761.

Belongs to the SOWAH family.

The protein is Ankyrin repeat domain-containing protein SOWAHB (SOWAHB) of Homo sapiens (Human).